A 5405-amino-acid polypeptide reads, in one-letter code: IgGFc-binding protein (5405 aa).

An N-terminal signal peptide occupies residues 1 to 23 (MGALWSWWILWAGATLLWGLTQE). The segment at 24–450 (ASVDLKNTGR…EPSCEGMQCA (427 aa)) is igGFc-binding. N-linked (GlcNAc...) asparagine glycosylation is found at Asn75 and Asn91. Positions 470-650 (AVCRAQGDPH…KLDDGDYLCE (181 aa)) constitute a VWFD 1 domain. 2 cysteine pairs are disulfide-bonded: Cys472/Cys611 and Cys494/Cys649. The region spanning 745-799 (CPANSRYELCGPACPTSCNGAAAPSNCSGRPCVEGCVCLPGFVASGGACVPASSC) is the TIL 1 domain. The 180-residue stretch at 862 to 1041 (GTCQGSGDPH…WQEETRPGCG (180 aa)) folds into the VWFD 2 domain. 2 disulfides stabilise this stretch: Cys864–Cys1003 and Cys886–Cys1040. A TIL 2 domain is found at 1136 to 1189 (CPPHSHYEACSYGCPLSCGDLPVPGGCGSECHEGCVCDEGFALSGESCLPLASC). In terms of domain architecture, VWFD 3 spans 1250-1429 (STCQASGDPH…EEVVPDSPCL (180 aa)). Intrachain disulfides connect Cys1252–Cys1390 and Cys1274–Cys1428. A glycan (N-linked (GlcNAc...) (complex) asparagine) is linked at Asn1317. One can recognise a TIL 3 domain in the interval 1532–1585 (CPPNSHYELCADTCSLGCSALSAPPQCQDGCAEGCQCDSGFLYNGQACVPIQQC). The VWFD 4 domain occupies 1671–1854 (ATCWLWGDPH…RAPGWDPLCW (184 aa)). 3 disulfides stabilise this stretch: Cys1673/Cys1815, Cys1695/Cys1853, and Cys1704/Cys1812. Asn1743 carries N-linked (GlcNAc...) asparagine glycosylation. Residues 1950–2007 (CPENSHYEVCGSPCPASCPSPAPLTTPAVCEGPCVEGCQCDAGFVLSADRCVPLNNGC) form the TIL 4 domain. The region spanning 2070–2253 (AECQAWGDPH…VSKPCPSPCT (184 aa)) is the VWFD 5 domain. Intrachain disulfides connect Cys2072–Cys2211 and Cys2094–Cys2252. Asn2138 carries N-linked (GlcNAc...) asparagine glycosylation. Residues 2337 to 2390 (CPAHSHYELCGDSCPGSCPSLSAPEGCESACREGCVCDAGFVLSGDTCVPVGQC) enclose the TIL 5 domain. One can recognise a VWFD 6 domain in the interval 2451-2630 (TTCQASGDPH…EEVVPDSPCL (180 aa)). 2 disulfides stabilise this stretch: Cys2453–Cys2591 and Cys2475–Cys2629. The N-linked (GlcNAc...) asparagine glycan is linked to Asn2518. Residues 2733–2786 (CPQNSHYELCADTCSLGCSALSAPLQCPDGCAEGCQCDSGFLYNGQACVPIQQC) form the TIL 6 domain. The VWFD 7 domain occupies 2872 to 3055 (ATCWLWGDPH…RAPGWDPLCW (184 aa)). 3 disulfides stabilise this stretch: Cys2874-Cys3016, Cys2896-Cys3054, and Cys2905-Cys3013. In terms of domain architecture, TIL 7 spans 3151–3208 (CPENSHYEVCGPPCPASCPSPAPLTTPAVCEGPCVEGCQCDAGFVLSADRCVPLNNGC). Residues 3271 to 3454 (AECQAWGDPH…VSKPCPSPCT (184 aa)) form the VWFD 8 domain. 2 cysteine pairs are disulfide-bonded: Cys3273-Cys3412 and Cys3295-Cys3453. The TIL 8 domain maps to 3538-3591 (CPAHSHYELCGDSCPGSCPSLSAPEGCESACREGCVCDAGFVLSGDTCVPVGQC). In terms of domain architecture, VWFD 9 spans 3652–3831 (TTCQASGDPH…EEVVPDSPCL (180 aa)). 2 cysteine pairs are disulfide-bonded: Cys3654–Cys3792 and Cys3676–Cys3830. An N-linked (GlcNAc...) asparagine glycan is attached at Asn3719. Residues 3934-3987 (CPQNSHYELCADTCSLGCSALSAPLQCPDGCAEGCQCDSGFLYNGQACVPIQQC) enclose the TIL 9 domain. Residues 4073–4256 (ATCWLWGDPH…RAPGWDPLCW (184 aa)) enclose the VWFD 10 domain. 3 disulfides stabilise this stretch: Cys4075-Cys4217, Cys4097-Cys4255, and Cys4106-Cys4214. Asn4145 is a glycosylation site (N-linked (GlcNAc...) asparagine). One can recognise a TIL 10 domain in the interval 4352–4409 (CPENSHYEVCGPPCPASCPSPAPLTTPAVCEGPCVEGCQCDAGFVLSADRCVPLNNGC). The 184-residue stretch at 4472–4655 (AECQAWGDPH…VSKPCPSPCT (184 aa)) folds into the VWFD 11 domain. Cystine bridges form between Cys4474/Cys4613 and Cys4496/Cys4654. N-linked (GlcNAc...) asparagine glycosylation occurs at Asn4540. Residues 4739–4792 (CPAHSHYELCGDSCPVSCPSLSAPEGCESACREGCVCDAGFVLSGDTCVPVGQC) enclose the TIL 11 domain. The region spanning 4854–5025 (GRCLANGGIH…RAPGSSKGCG (172 aa)) is the VWFD 12 domain. Intrachain disulfides connect Cys4856–Cys4986 and Cys4878–Cys5024. The TIL 12 domain occupies 5121-5174 (CPAHSHYSICTRTCQGSCAALSGLTGCTTRCFEGCECDDRFLLSQGVCIPVQDC). The 172-residue stretch at 5233–5404 (GLCVLSVGAN…WRAQDFSPCY (172 aa)) folds into the VWFD 13 domain. Cys5235 and Cys5372 are joined by a disulfide.

Interacts with the Fc portion of IgG and with MUC2. In terms of tissue distribution, mainly expressed in placenta and colon epithelium. Expressed in thyroid, and down-regulated in thyroid carcinomas. Present in serum, with higher levels in patients with various autoimmune diseases (at protein level).

Its subcellular location is the secreted. Its function is as follows. May be involved in the maintenance of the mucosal structure as a gel-like component of the mucosa. The protein is IgGFc-binding protein (FCGBP) of Homo sapiens (Human).